The sequence spans 372 residues: tRNA-specific 2-thiouridylase MnmA (372 aa).

ATP is bound by residues Gly-9 to Ser-16 and Met-35. The tract at residues Asn-95–Asp-97 is interaction with target base in tRNA. Catalysis depends on Cys-100, which acts as the Nucleophile. Cys-100 and Cys-201 are disulfide-bonded. Gly-124 lines the ATP pocket. An interaction with tRNA region spans residues Lys-151–Gln-153. The active-site Cysteine persulfide intermediate is the Cys-201. The segment at Arg-317 to Tyr-318 is interaction with tRNA.

This sequence belongs to the MnmA/TRMU family.

Its subcellular location is the cytoplasm. It catalyses the reaction S-sulfanyl-L-cysteinyl-[protein] + uridine(34) in tRNA + AH2 + ATP = 2-thiouridine(34) in tRNA + L-cysteinyl-[protein] + A + AMP + diphosphate + H(+). Catalyzes the 2-thiolation of uridine at the wobble position (U34) of tRNA, leading to the formation of s(2)U34. The polypeptide is tRNA-specific 2-thiouridylase MnmA (Herminiimonas arsenicoxydans).